Consider the following 101-residue polypeptide: ATP synthase subunit c (101 aa).

2 consecutive transmembrane segments (helical) span residues 31–51 and 81–101; these read AFAY…GAGQ and AISE…IFVG.

The protein belongs to the ATPase C chain family. F-type ATPases have 2 components, F(1) - the catalytic core - and F(0) - the membrane proton channel. F(1) has five subunits: alpha(3), beta(3), gamma(1), delta(1), epsilon(1). F(0) has three main subunits: a(1), b(2) and c(10-14). The alpha and beta chains form an alternating ring which encloses part of the gamma chain. F(1) is attached to F(0) by a central stalk formed by the gamma and epsilon chains, while a peripheral stalk is formed by the delta and b chains.

Its subcellular location is the cell membrane. Functionally, f(1)F(0) ATP synthase produces ATP from ADP in the presence of a proton or sodium gradient. F-type ATPases consist of two structural domains, F(1) containing the extramembraneous catalytic core and F(0) containing the membrane proton channel, linked together by a central stalk and a peripheral stalk. During catalysis, ATP synthesis in the catalytic domain of F(1) is coupled via a rotary mechanism of the central stalk subunits to proton translocation. In terms of biological role, key component of the F(0) channel; it plays a direct role in translocation across the membrane. A homomeric c-ring of between 10-14 subunits forms the central stalk rotor element with the F(1) delta and epsilon subunits. The polypeptide is ATP synthase subunit c (Mesomycoplasma hyopneumoniae (strain J / ATCC 25934 / NCTC 10110) (Mycoplasma hyopneumoniae)).